Consider the following 362-residue polypeptide: Ferredoxin--NADP reductase, leaf isozyme 1, chloroplastic (362 aa).

A chloroplast-targeting transit peptide spans 1 to 36 (MAAVTAAAVSTSAAAAVTKASPSPAHCFLPCPPRTR). Residues 83 to 205 (KEPYVGKCLL…TGPVGKEMLM (123 aa)) form the FAD-binding FR-type domain. FAD contacts are provided by residues 141–144 (RLYS), 162–164 (CVK), tyrosine 168, 179–181 (VCS), and threonine 220. The NADP(+) site is built by serine 144 and lysine 164. Cysteine 180 and cysteine 185 are oxidised to a cystine. At serine 181 the chain carries Phosphoserine. Residues threonine 220, 252–253 (VP), 282–283 (SR), lysine 292, 321–322 (GL), and glutamate 360 contribute to the NADP(+) site.

It belongs to the ferredoxin--NADP reductase type 1 family. As to quaternary structure, heterodimer with LFNR2. Component of high molecular weight thylakoid LFNRs-containing protein complexes containing LIR1, LFNR1, LFNR2, TIC62 and TROL proteins. Interacts directly with LFNR1 and LFNR2; LIR1 increases the affinity of LFNR1 and LFNR2 for TIC62 and subsequent thylakoid relocalization. It depends on FAD as a cofactor. In terms of processing, may form interchain disulfide bonds with LIR1.

The protein localises to the plastid. It is found in the chloroplast stroma. It localises to the chloroplast thylakoid membrane. It catalyses the reaction 2 reduced [2Fe-2S]-[ferredoxin] + NADP(+) + H(+) = 2 oxidized [2Fe-2S]-[ferredoxin] + NADPH. It participates in energy metabolism; photosynthesis. Functionally, plays a key role in regulating the relative amounts of cyclic and non-cyclic electron flow to meet the demands of the plant for ATP and reducing power. This Oryza sativa subsp. indica (Rice) protein is Ferredoxin--NADP reductase, leaf isozyme 1, chloroplastic.